The chain runs to 150 residues: Transcriptional repressor NrdR (150 aa).

A zinc finger spans residues C3–C33. In terms of domain architecture, ATP-cone spans V48 to K138.

This sequence belongs to the NrdR family. Requires Zn(2+) as cofactor.

Its function is as follows. Negatively regulates transcription of bacterial ribonucleotide reductase nrd genes and operons by binding to NrdR-boxes. The polypeptide is Transcriptional repressor NrdR (Herpetosiphon aurantiacus (strain ATCC 23779 / DSM 785 / 114-95)).